Consider the following 228-residue polypeptide: Ion-translocating oxidoreductase complex subunit E (228 aa).

A run of 5 helical transmembrane segments spans residues 18–38, 69–89, 92–112, 125–145, and 182–202; these read ALVQ…ATNA, IPIY…LINA, FGLY…CIVV, LLSA…MFVL, and PFLL…MLAV.

The protein belongs to the NqrDE/RnfAE family. The complex is composed of six subunits: RnfA, RnfB, RnfC, RnfD, RnfE and RnfG.

Its subcellular location is the cell inner membrane. In terms of biological role, part of a membrane-bound complex that couples electron transfer with translocation of ions across the membrane. The polypeptide is Ion-translocating oxidoreductase complex subunit E (Cronobacter sakazakii (strain ATCC BAA-894) (Enterobacter sakazakii)).